A 192-amino-acid chain; its full sequence is Orotate phosphoribosyltransferase (192 aa).

116 to 124 lines the 5-phospho-alpha-D-ribose 1-diphosphate pocket; sequence EDIVTTGLS. Orotate contacts are provided by threonine 120 and arginine 148.

Belongs to the purine/pyrimidine phosphoribosyltransferase family. PyrE subfamily. In terms of assembly, homodimer. Requires Mg(2+) as cofactor.

The catalysed reaction is orotidine 5'-phosphate + diphosphate = orotate + 5-phospho-alpha-D-ribose 1-diphosphate. It functions in the pathway pyrimidine metabolism; UMP biosynthesis via de novo pathway; UMP from orotate: step 1/2. Its function is as follows. Catalyzes the transfer of a ribosyl phosphate group from 5-phosphoribose 1-diphosphate to orotate, leading to the formation of orotidine monophosphate (OMP). The chain is Orotate phosphoribosyltransferase from Brucella anthropi (strain ATCC 49188 / DSM 6882 / CCUG 24695 / JCM 21032 / LMG 3331 / NBRC 15819 / NCTC 12168 / Alc 37) (Ochrobactrum anthropi).